A 351-amino-acid polypeptide reads, in one-letter code: Hydroxymethylglutaryl-CoA synthase (351 aa).

Glutamate 80 acts as the Proton donor/acceptor in catalysis. Cysteine 112 (acyl-thioester intermediate) is an active-site residue. (3S)-3-hydroxy-3-methylglutaryl-CoA contacts are provided by cysteine 112 and serine 153. Position 199 (arginine 199) interacts with CoA. (3S)-3-hydroxy-3-methylglutaryl-CoA contacts are provided by threonine 201 and histidine 234. Histidine 234 acts as the Proton donor/acceptor in catalysis. Position 239 (lysine 239) interacts with CoA. Positions 243, 266, and 296 each coordinate (3S)-3-hydroxy-3-methylglutaryl-CoA.

It belongs to the thiolase-like superfamily. Archaeal HMG-CoA synthase family. Interacts with acetoacetyl-CoA thiolase that catalyzes the precedent step in the pathway and with a DUF35 protein. The acetoacetyl-CoA thiolase/HMG-CoA synthase complex channels the intermediate via a fused CoA-binding site, which allows for efficient coupling of the endergonic thiolase reaction with the exergonic HMGCS reaction.

The enzyme catalyses acetoacetyl-CoA + acetyl-CoA + H2O = (3S)-3-hydroxy-3-methylglutaryl-CoA + CoA + H(+). Its pathway is metabolic intermediate biosynthesis; (R)-mevalonate biosynthesis; (R)-mevalonate from acetyl-CoA: step 2/3. Its function is as follows. Catalyzes the condensation of acetyl-CoA with acetoacetyl-CoA to form 3-hydroxy-3-methylglutaryl-CoA (HMG-CoA). Functions in the mevalonate (MVA) pathway leading to isopentenyl diphosphate (IPP), a key precursor for the biosynthesis of isoprenoid compounds that are building blocks of archaeal membrane lipids. In Thermoplasma volcanium (strain ATCC 51530 / DSM 4299 / JCM 9571 / NBRC 15438 / GSS1), this protein is Hydroxymethylglutaryl-CoA synthase.